A 553-amino-acid polypeptide reads, in one-letter code: Arginine--tRNA ligase (553 aa).

Positions 130 to 140 match the 'HIGH' region motif; sequence ANPTGDLHIGH.

It belongs to the class-I aminoacyl-tRNA synthetase family. Monomer.

It is found in the cytoplasm. It catalyses the reaction tRNA(Arg) + L-arginine + ATP = L-arginyl-tRNA(Arg) + AMP + diphosphate. The chain is Arginine--tRNA ligase from Staphylococcus aureus (strain MRSA252).